The chain runs to 379 residues: Cytochrome b (379 aa).

4 consecutive transmembrane segments (helical) span residues Phe33–Met53, Trp77–Val98, Trp113–Leu133, and Phe178–Leu198. Heme b contacts are provided by His83 and His97. Heme b contacts are provided by His182 and His196. His201 serves as a coordination point for a ubiquinone. Helical transmembrane passes span Thr226 to Tyr246, Leu288 to Gln308, Leu320 to Gly340, and Phe347 to Pro367.

It belongs to the cytochrome b family. The cytochrome bc1 complex contains 11 subunits: 3 respiratory subunits (MT-CYB, CYC1 and UQCRFS1), 2 core proteins (UQCRC1 and UQCRC2) and 6 low-molecular weight proteins (UQCRH/QCR6, UQCRB/QCR7, UQCRQ/QCR8, UQCR10/QCR9, UQCR11/QCR10 and a cleavage product of UQCRFS1). This cytochrome bc1 complex then forms a dimer. The cofactor is heme b.

It is found in the mitochondrion inner membrane. In terms of biological role, component of the ubiquinol-cytochrome c reductase complex (complex III or cytochrome b-c1 complex) that is part of the mitochondrial respiratory chain. The b-c1 complex mediates electron transfer from ubiquinol to cytochrome c. Contributes to the generation of a proton gradient across the mitochondrial membrane that is then used for ATP synthesis. The sequence is that of Cytochrome b (MT-CYB) from Lepilemur septentrionalis (Northern sportive lemur).